The following is a 131-amino-acid chain: Small ribosomal subunit protein uS8 (131 aa).

The protein belongs to the universal ribosomal protein uS8 family. As to quaternary structure, part of the 30S ribosomal subunit. Contacts proteins S5 and S12.

One of the primary rRNA binding proteins, it binds directly to 16S rRNA central domain where it helps coordinate assembly of the platform of the 30S subunit. The protein is Small ribosomal subunit protein uS8 of Solibacter usitatus (strain Ellin6076).